Consider the following 311-residue polypeptide: Meteorin-like protein (311 aa).

Positions 1 to 45 (MRGVVWAARRRAGQQWPRSPGPGPGPPPPPPLLLLLLLLLGGASA) are cleaved as a signal peptide. Cys52 and Cys75 form a disulfide bridge. Asn103 carries N-linked (GlcNAc...) asparagine glycosylation. 4 disulfide bridges follow: Cys107–Cys143, Cys188–Cys260, Cys191–Cys284, and Cys201–Cys306.

This sequence belongs to the meteorin family. As to expression, abundantly expressed in adipose tissue.

It localises to the secreted. In terms of biological role, hormone induced following exercise or cold exposure that promotes energy expenditure. Induced either in the skeletal muscle after exercise or in adipose tissue following cold exposure and is present in the circulation. Able to stimulate energy expenditure associated with the browning of the white fat depots and improves glucose tolerance. Does not promote an increase in a thermogenic gene program via direct action on adipocytes, but acts by stimulating several immune cell subtypes to enter the adipose tissue and activate their prothermogenic actions. Stimulates an eosinophil-dependent increase in IL4 expression and promotes alternative activation of adipose tissue macrophages, which are required for the increased expression of the thermogenic and anti-inflammatory gene programs in fat. Required for some cold-induced thermogenic responses, suggesting a role in metabolic adaptations to cold temperatures. The protein is Meteorin-like protein (Metrnl) of Rattus norvegicus (Rat).